The following is a 960-amino-acid chain: Serine/threonine-protein kinase atg1 (960 aa).

A Protein kinase domain is found at 22 to 327 (YTRLDEIGRG…FPEFFSNNVI (306 aa)). ATP is bound by residues 28 to 36 (IGRGSFATV) and K51. Residue D165 is the Proton acceptor of the active site. Disordered regions lie at residues 333–467 (GLLA…RAQE), 503–538 (PRLQ…PHAN), 550–571 (ARAD…QSPT), 673–694 (SAST…SADS), 789–815 (RLPP…TADV), and 926–960 (AKRS…TPPR). Polar residues-rich tracts occupy residues 376–388 (PVTT…TPPT) and 520–536 (RRTT…SSPH). The segment covering 550 to 566 (ARADSTHQRQHSYERRY) has biased composition (basic and acidic residues). Residues 789-800 (RLPPDHPSHPDN) are compositionally biased toward basic and acidic residues. Low complexity predominate over residues 801–815 (HSISSTAGSSSTADV). The span at 930–951 (SAPTPTAGSAGKTPTSNISPVT) shows a compositional bias: polar residues.

Belongs to the protein kinase superfamily. Ser/Thr protein kinase family. APG1/unc-51/ULK1 subfamily. As to quaternary structure, homodimer. Forms a ternary complex with ATG13 and ATG17.

The protein resides in the cytoplasm. The protein localises to the preautophagosomal structure membrane. The catalysed reaction is L-seryl-[protein] + ATP = O-phospho-L-seryl-[protein] + ADP + H(+). It catalyses the reaction L-threonyl-[protein] + ATP = O-phospho-L-threonyl-[protein] + ADP + H(+). Serine/threonine protein kinase involved in the cytoplasm to vacuole transport (Cvt) and found to be essential in autophagy, where it is required for the formation of autophagosomes. Involved in the clearance of protein aggregates which cannot be efficiently cleared by the proteasome. Required for selective autophagic degradation of the nucleus (nucleophagy) as well as for mitophagy which contributes to regulate mitochondrial quantity and quality by eliminating the mitochondria to a basal level to fulfill cellular energy requirements and preventing excess ROS production. Also involved in endoplasmic reticulum-specific autophagic process, in selective removal of ER-associated degradation (ERAD) substrates. Plays a key role in ATG9 and ATG23 cycling through the pre-autophagosomal structure and is necessary to promote ATG18 binding to ATG9 through phosphorylation of ATG9. Catalyzes phosphorylation of ATG4, decreasing the interaction between ATG4 and ATG8 and impairing deconjugation of PE-conjugated forms of ATG8. The protein is Serine/threonine-protein kinase atg1 of Penicillium rubens (strain ATCC 28089 / DSM 1075 / NRRL 1951 / Wisconsin 54-1255) (Penicillium chrysogenum).